The following is a 148-amino-acid chain: Probable DNA-directed RNA polymerases I, II, and III subunit RPABC3 (148 aa).

The tract at residues 16–40 (DPDGKKFDRVSRYFCDAESFKMELI) is non-specific ssDNA binding.

The protein belongs to the eukaryotic RPB8 RNA polymerase subunit family. In terms of assembly, component of the RNA polymerase I (Pol I), RNA polymerase II (Pol II) and RNA polymerase III (Pol III) complexes consisting of at least 13, 12 and 17 subunits, respectively. Directly interacts with POLR2A.

The protein localises to the nucleus. Functionally, DNA-dependent RNA polymerase catalyzes the transcription of DNA into RNA using the four ribonucleoside triphosphates as substrates. Common component of RNA polymerases I, II and III which synthesize ribosomal RNA precursors, mRNA precursors and many functional non-coding RNAs, and small RNAs, such as 5S rRNA and tRNAs, respectively. The protein is Probable DNA-directed RNA polymerases I, II, and III subunit RPABC3 of Caenorhabditis briggsae.